The sequence spans 144 residues: HTH-type transcriptional regulator LrpC (144 aa).

The HTH asnC-type domain occupies 3 to 64 (LDQIDLNIIE…EVDQKKLGLP (62 aa)). A DNA-binding region (H-T-H motif) is located at residues 22-41 (MRELGRKIKLSPPSVTERVR).

Its function is as follows. Transcriptional regulator with a possible role in regulation of amino acid metabolism. Plays a role in the growth phase transition. This is HTH-type transcriptional regulator LrpC (lrpC) from Bacillus subtilis (strain 168).